The primary structure comprises 158 residues: uncharacterized protein (158 aa).

2 disordered regions span residues 1 to 86 (MDFR…DHWW) and 138 to 158 (ASQV…LLGF). The span at 7–76 (SPTTCTTPAS…PTPASSGSAA (70 aa)) shows a compositional bias: low complexity.

This is an uncharacterized protein from Homo sapiens (Human).